The primary structure comprises 139 residues: Acidic phospholipase A2 5 (139 aa).

The signal sequence occupies residues 1–16 (MRTLWIVAVWLMGVEG). Cystine bridges form between Cys42–Cys131, Cys44–Cys60, Cys59–Cys111, Cys65–Cys139, Cys66–Cys104, Cys73–Cys97, and Cys91–Cys102. Residues Tyr43, Gly45, and Gly47 each contribute to the Ca(2+) site. The active site involves His63. Residue Asp64 coordinates Ca(2+). Asp105 is an active-site residue.

This sequence belongs to the phospholipase A2 family. Group II subfamily. D49 sub-subfamily. Ca(2+) is required as a cofactor. In terms of tissue distribution, expressed by the venom gland.

It localises to the secreted. It carries out the reaction a 1,2-diacyl-sn-glycero-3-phosphocholine + H2O = a 1-acyl-sn-glycero-3-phosphocholine + a fatty acid + H(+). PLA2 catalyzes the calcium-dependent hydrolysis of the 2-acyl groups in 3-sn-phosphoglycerides. This Echis pyramidum leakeyi (Leakey's carpet viper) protein is Acidic phospholipase A2 5.